An 848-amino-acid chain; its full sequence is Aryl hydrocarbon receptor (848 aa).

A propeptide spanning residues 1–9 is cleaved from the precursor; that stretch reads MSSGANITY. The disordered stretch occupies residues 1–38; the sequence is MSSGANITYASRKRRKPVQKTVKPIPAEGIKSNPSKRH. 2 consecutive short sequence motifs (nuclear localization signal) follow at residues 12 to 15 and 36 to 41; these read RKRR and KRHRDR. In terms of domain architecture, bHLH spans 26 to 79; the sequence is PAEGIKSNPSKRHRDRLNTELDRLASLLPFPQDVINKLDKLSVLRLSVSYLRAK. The DNA-binding stretch occupies residues 37–65; that stretch reads RHRDRLNTELDRLASLLPFPQDVINKLDK. Required for maintaining the overall integrity of the AHR:ARNT heterodimer and its transcriptional activity regions lie at residues 49-81, 116-124, and 260-262; these read LASLLPFPQDVINKLDKLSVLRLSVSYLRAKSF, LLQALNGFV, and FAI. Positions 63–71 match the Nuclear export signal motif; it reads LDKLSVLRL. A PAS 1 domain is found at 116–179; that stretch reads LLQALNGFVL…RQLHWALNPD (64 aa). Residues 269–336 form the PAS 2 domain; that stretch reads PSILEIRTKN…CAESHIRMIK (68 aa). Positions 342-380 constitute a PAC domain; the sequence is MTVFRLFAKHSRWRWVQSNARLIYRNGRPDYIIATQRPL. Residues 421-449 form a disordered region; sequence LPIRTKSNTSRKDWAPQSTPSKDSFHPSS. Residues 436–449 show a composition bias toward polar residues; the sequence is PQSTPSKDSFHPSS.

In terms of assembly, homodimer. Heterodimer; efficient DNA binding requires dimerization with another bHLH protein. Interacts with ARNT; the heterodimer ARNT:AHR binds to core DNA sequence 5'-TGCGTG-3' within the dioxin response element (DRE) of target gene promoters and activates their transcription. Binds MYBBP1A. Interacts with coactivators including SRC-1, RIP140 and NOCA7, and with the corepressor SMRT. Interacts with NEDD8 and IVNS1ABP. Interacts with BMAL1. Interacts with HSP90AB1. Interacts with TIPARP; leading to mono-ADP-ribosylation of AHR and subsequent inhibition of AHR. Post-translationally, mono-ADP-ribosylated, leading to inhibit transcription activator activity of AHR. Expressed in all tissues tested including brain, heart, kidney, liver, lung, muscle, ovary, skin, spleen and thymus.

The protein localises to the cytoplasm. The protein resides in the nucleus. Ligand-activated transcription factor that enables cells to adapt to changing conditions by sensing compounds from the environment, diet, microbiome and cellular metabolism, and which plays important roles in development, immunity and cancer. Upon ligand binding, translocates into the nucleus, where it heterodimerizes with ARNT and induces transcription by binding to xenobiotic response elements (XRE). Regulates a variety of biological processes, including angiogenesis, hematopoiesis, drug and lipid metabolism, cell motility and immune modulation. Xenobiotics can act as ligands: upon xenobiotic-binding, activates the expression of multiple phase I and II xenobiotic chemical metabolizing enzyme genes (such as the CYP1A1 gene). Mediates biochemical and toxic effects of halogenated aromatic hydrocarbons. Next to xenobiotics, natural ligands derived from plants, microbiota, and endogenous metabolism are potent AHR agonists. Tryptophan (Trp) derivatives constitute an important class of endogenous AHR ligands. Acts as a negative regulator of anti-tumor immunity: indoles and kynurenic acid generated by Trp catabolism act as ligand and activate AHR, thereby promoting AHR-driven cancer cell motility and suppressing adaptive immunity. Regulates the circadian clock by inhibiting the basal and circadian expression of the core circadian component PER1. Inhibits PER1 by repressing the CLOCK-BMAL1 heterodimer mediated transcriptional activation of PER1. The heterodimer ARNT:AHR binds to core DNA sequence 5'-TGCGTG-3' within the dioxin response element (DRE) of target gene promoters and activates their transcription. The polypeptide is Aryl hydrocarbon receptor (Ahr) (Mus musculus (Mouse)).